A 468-amino-acid polypeptide reads, in one-letter code: Ribosomal protein uS12 methylthiotransferase RimO (468 aa).

Residues 16-130 enclose the MTTase N-terminal domain; sequence NKIHFISLGC…ILSAIESRES (115 aa). [4Fe-4S] cluster is bound by residues Cys25, Cys61, Cys93, Cys164, Cys168, and Cys171. A Radical SAM core domain is found at 150–382; it reads STPKHYAYLK…SQIQKRNVDK (233 aa). The TRAM domain maps to 385-455; sequence QKLIGEKIEA…GYDLVGRVVK (71 aa).

It belongs to the methylthiotransferase family. RimO subfamily. The cofactor is [4Fe-4S] cluster.

Its subcellular location is the cytoplasm. It catalyses the reaction L-aspartate(89)-[ribosomal protein uS12]-hydrogen + (sulfur carrier)-SH + AH2 + 2 S-adenosyl-L-methionine = 3-methylsulfanyl-L-aspartate(89)-[ribosomal protein uS12]-hydrogen + (sulfur carrier)-H + 5'-deoxyadenosine + L-methionine + A + S-adenosyl-L-homocysteine + 2 H(+). Its function is as follows. Catalyzes the methylthiolation of an aspartic acid residue of ribosomal protein uS12. In Chlamydia pneumoniae (Chlamydophila pneumoniae), this protein is Ribosomal protein uS12 methylthiotransferase RimO.